Consider the following 27-residue polypeptide: Trichocyst matrix protein T4-C (27 aa).

The protein belongs to the TMP family.

It localises to the trichocyst. Structural protein that crystallize inside the trichocyst matrix. This Paramecium tetraurelia protein is Trichocyst matrix protein T4-C (T4C).